The sequence spans 2599 residues: Protein DOP1 homolog (2599 aa).

Disordered stretches follow at residues 532 to 571 (EQSG…SDSR) and 595 to 701 (ASNQ…LDEE). Composition is skewed to polar residues over residues 534–549 (SGGS…NSAS), 595–604 (ASNQSVGRQS), and 625–636 (ASDTGQQSSSDL). Ser753 carries the phosphoserine modification. The segment covering 1240–1251 (PRIEIPHKETPL) has biased composition (basic and acidic residues). Disordered stretches follow at residues 1240 to 1316 (PRIE…SSSA) and 1347 to 1368 (TYRL…EQKD). The segment covering 1264-1282 (QPSQEQPANQPDNSLQYDQ) has biased composition (polar residues). Over residues 1297 to 1309 (SELRETSIEKEDS) the composition is skewed to basic and acidic residues. Thr1355 is subject to Phosphothreonine. Ser1360, Ser1363, and Ser1371 each carry phosphoserine. The disordered stretch occupies residues 1409–1442 (CISKTSTDSNISGSHVEQPEQEEETEPGTESTIN). Over residues 1410 to 1423 (ISKTSTDSNISGSH) the composition is skewed to polar residues. At Ser2525 the chain carries Phosphoserine.

The protein belongs to the DOP1 family.

The protein localises to the golgi apparatus membrane. In terms of biological role, may be involved in protein traffic between late Golgi and early endosomes. The sequence is that of Protein DOP1 homolog from Drosophila melanogaster (Fruit fly).